The chain runs to 139 residues: Acidic phospholipase A2 4 (139 aa).

An N-terminal signal peptide occupies residues 1–16; that stretch reads MRTLWIVAVWLVGVEG. 7 disulfides stabilise this stretch: cysteine 42/cysteine 131, cysteine 44/cysteine 60, cysteine 59/cysteine 111, cysteine 65/cysteine 139, cysteine 66/cysteine 104, cysteine 73/cysteine 97, and cysteine 91/cysteine 102. 3 residues coordinate Ca(2+): tyrosine 43, glycine 45, and glycine 47. Histidine 63 is an active-site residue. Aspartate 64 contacts Ca(2+). Aspartate 105 is a catalytic residue.

The protein belongs to the phospholipase A2 family. Group II subfamily. D49 sub-subfamily. Ca(2+) is required as a cofactor. In terms of tissue distribution, expressed by the venom gland.

It localises to the secreted. It carries out the reaction a 1,2-diacyl-sn-glycero-3-phosphocholine + H2O = a 1-acyl-sn-glycero-3-phosphocholine + a fatty acid + H(+). In terms of biological role, PLA2 catalyzes the calcium-dependent hydrolysis of the 2-acyl groups in 3-sn-phosphoglycerides. This Echis carinatus sochureki (Saw-scaled viper) protein is Acidic phospholipase A2 4.